The primary structure comprises 352 residues: C-C chemokine receptor type 5 (352 aa).

Over 1–30 (MDYEVSSPIYDIDYGASEPCQKIDVKQMGA) the chain is Extracellular. Sulfotyrosine is present on Tyr3. Residues Ser6 and Ser7 are each glycosylated (O-linked (GalNAc...) serine). A sulfotyrosine mark is found at Tyr10 and Tyr14. Cystine bridges form between Cys20–Cys269 and Cys101–Cys178. The chain crosses the membrane as a helical span at residues 31–58 (QLLPPLYSMVFLFGFVGNMLVVLILINC). Residues 59–68 (KRLKSMTDIY) are Cytoplasmic-facing. Residues 69–89 (LLNLAISDLFFLFTVPFWAHY) traverse the membrane as a helical segment. Residues 90-102 (AAGQWDFGNTMCQ) are Extracellular-facing. The chain crosses the membrane as a helical span at residues 103–124 (FLTGLYFIGFFSGIFFIILLTI). Over 125–141 (DRYLAIVHAVFALKART) the chain is Cytoplasmic. A helical transmembrane segment spans residues 142–166 (VTFGVVTSVITWVVAVFASLPGIIF). The Extracellular portion of the chain corresponds to 167–198 (TRSQKEGYHYTCSPHFPFGQYRFWKNLETLKM). The chain crosses the membrane as a helical span at residues 199 to 218 (VILGLVLPLLVMVICYSGIL). The Cytoplasmic segment spans residues 219 to 235 (KTLLRCRNEKKRHRAVR). Residues 236-260 (LIFTIMIVYFLFWAPYNIVLLLNTY) traverse the membrane as a helical segment. The Extracellular portion of the chain corresponds to 261–277 (QEFFGLNNCSSSNRLDQ). Residues 278–301 (AMQVTETLGMTHCCVNPIIYAFVG) traverse the membrane as a helical segment. The Cytoplasmic portion of the chain corresponds to 302–352 (EKFRNYLLVFFQKHIAKRFCKCCSIFQKEAPERANSVYTRSTGEQEISVGL). S-palmitoyl cysteine attachment occurs at residues Cys321, Cys323, and Cys324. Residues Ser337, Ser342, and Ser349 each carry the phosphoserine; by BARK1 modification.

The protein belongs to the G-protein coupled receptor 1 family. In terms of assembly, interacts with PRAF2. Efficient ligand binding to CCL3/MIP-1alpha and CCL4/MIP-1beta requires sulfation, O-glycosylation and sialic acid modifications. Glycosylation on Ser-6 is required for efficient binding of CCL4. Interacts with GRK2. Interacts with ARRB1 and ARRB2. Interacts with CNIH4. Interacts with S100A4; this interaction stimulates T-lymphocyte chemotaxis. Post-translationally, sulfated on at least 2 of the N-terminal tyrosines. Sulfation is required for efficient binding of the chemokines, CCL3 and CCL4. Palmitoylation in the C-terminal is important for cell surface expression. In terms of processing, phosphorylation on serine residues in the C-terminal is stimulated by binding CC chemokines especially by APO-RANTES. Post-translationally, O-glycosylated, but not N-glycosylated. Ser-6 appears to be the major site even if Ser-7 may be also O-glycosylated. Also sialylated glycans present which contribute to chemokine binding. Ser-17 may also be glycosylated and, if so, with small moieties such as a T-antigen.

The protein localises to the cell membrane. In terms of biological role, receptor for a number of inflammatory CC-chemokines including CCL3/MIP-1-alpha, CCL4/MIP-1-beta and RANTES and subsequently transduces a signal by increasing the intracellular calcium ion level. May play a role in the control of granulocytic lineage proliferation or differentiation. Participates in T-lymphocyte migration to the infection site by acting as a chemotactic receptor. This is C-C chemokine receptor type 5 (CCR5) from Plecturocebus moloch (Dusky titi monkey).